The primary structure comprises 119 residues: Membrane-anchored ubiquitin-fold protein 1 (119 aa).

A Ubiquitin-like domain is found at 9–75 (FEIKFRLPDG…LENNKTLSEC (67 aa)). Position 116 is a cysteine methyl ester (C116). A lipid anchor (S-farnesyl cysteine) is attached at C116. Residues 117–119 (SIM) constitute a propeptide, removed in mature form.

The protein localises to the cell membrane. Its function is as follows. May serve as docking site to facilitate the association of other proteins to the plasma membrane. In Oryza sativa subsp. japonica (Rice), this protein is Membrane-anchored ubiquitin-fold protein 1 (MUB1).